Consider the following 117-residue polypeptide: Ribosome-binding factor A (117 aa).

Belongs to the RbfA family. Monomer. Binds 30S ribosomal subunits, but not 50S ribosomal subunits or 70S ribosomes.

It is found in the cytoplasm. In terms of biological role, one of several proteins that assist in the late maturation steps of the functional core of the 30S ribosomal subunit. Associates with free 30S ribosomal subunits (but not with 30S subunits that are part of 70S ribosomes or polysomes). Required for efficient processing of 16S rRNA. May interact with the 5'-terminal helix region of 16S rRNA. The sequence is that of Ribosome-binding factor A from Nitrosomonas europaea (strain ATCC 19718 / CIP 103999 / KCTC 2705 / NBRC 14298).